The primary structure comprises 131 residues: Small ribosomal subunit protein uS8 (131 aa).

This sequence belongs to the universal ribosomal protein uS8 family. Part of the 30S ribosomal subunit. Contacts proteins S5 and S12.

Functionally, one of the primary rRNA binding proteins, it binds directly to 16S rRNA central domain where it helps coordinate assembly of the platform of the 30S subunit. The chain is Small ribosomal subunit protein uS8 from Delftia acidovorans (strain DSM 14801 / SPH-1).